We begin with the raw amino-acid sequence, 609 residues long: ATP-dependent lipid A-core flippase (609 aa).

6 helical membrane-spanning segments follow: residues 47–67, 88–108, 167–187, 190–210, 279–299, and 305–325; these read LLAA…IYLI, ILML…VGSF, AIIT…VMFV, WQLS…ISII, VIQI…AIFG, and GSSW…AAIL. In terms of domain architecture, ABC transmembrane type-1 spans 47-340; the sequence is LLAAIGSIFF…LTKVNVVIQK (294 aa). In terms of domain architecture, ABC transporter spans 372–606; that stretch reads VTIKDLSFAF…GGLYTRLYQS (235 aa). 404–411 contributes to the ATP binding site; sequence GKSGSGKT.

The protein belongs to the ABC transporter superfamily. Lipid exporter (TC 3.A.1.106) family. Homodimer.

The protein localises to the cell inner membrane. It catalyses the reaction ATP + H2O + lipid A-core oligosaccharideSide 1 = ADP + phosphate + lipid A-core oligosaccharideSide 2.. In terms of biological role, involved in lipopolysaccharide (LPS) biosynthesis. Translocates lipid A-core from the inner to the outer leaflet of the inner membrane. Transmembrane domains (TMD) form a pore in the inner membrane and the ATP-binding domain (NBD) is responsible for energy generation. The chain is ATP-dependent lipid A-core flippase from Francisella tularensis subsp. holarctica (strain LVS).